A 277-amino-acid polypeptide reads, in one-letter code: Undecaprenyl-diphosphatase (277 aa).

8 consecutive transmembrane segments (helical) span residues 1–21 (MDII…FLPV), 38–58 (SSLA…LWFF), 93–113 (LVWY…LFES), 118–138 (LFAG…TILY), 168–188 (AILP…VIGL), 191–211 (EFAA…AFVV), 222–242 (FNAL…YLAI), and 256–276 (IFAY…ITHL).

This sequence belongs to the UppP family.

Its subcellular location is the cell membrane. The enzyme catalyses di-trans,octa-cis-undecaprenyl diphosphate + H2O = di-trans,octa-cis-undecaprenyl phosphate + phosphate + H(+). Its function is as follows. Catalyzes the dephosphorylation of undecaprenyl diphosphate (UPP). The sequence is that of Undecaprenyl-diphosphatase from Methanobrevibacter smithii (strain ATCC 35061 / DSM 861 / OCM 144 / PS).